The primary structure comprises 640 residues: Rab proteins geranylgeranyltransferase component A (640 aa).

2 disordered regions span residues 414 to 439 (DILG…NNNN) and 594 to 640 (HNEN…EMEL). The span at 419–439 (NNNNNNNNNNNNNNNNNNNNN) shows a compositional bias: low complexity. The span at 604-624 (IDSDEDEDEDINDMNDNEEED) shows a compositional bias: acidic residues.

Belongs to the Rab GDI family.

In terms of biological role, substrate-binding subunit (component A) of the Rab geranylgeranyltransferase (GGTase) complex. Binds unprenylated Rab proteins and presents the substrate peptide to the catalytic component B. The component A is thought to be regenerated by transferring its prenylated Rab back to the donor membrane. The chain is Rab proteins geranylgeranyltransferase component A (MRS6) from Candida albicans (Yeast).